The chain runs to 154 residues: CASP-like protein 5B2 (154 aa).

At 1 to 10 the chain is on the cytoplasmic side; sequence MKKLLGGPGT. A helical transmembrane segment spans residues 11–31; sequence VCGLLLRIGQCASAAASIGVM. Residues 32–42 lie on the Extracellular side of the membrane; the sequence is VSAKEFSVHTA. The chain crosses the membrane as a helical span at residues 43–63; sequence FCYLIASMGLQLLWSFGLACL. The Cytoplasmic segment spans residues 64-77; sequence DVYALRGKKDLQNP. Residues 78–98 traverse the membrane as a helical segment; sequence ILVSLFVVGDWVTAMLSLAAA. Over 99 to 129 the chain is Extracellular; that stretch reads CSSAGVVVLYEKDIKYCNTQSQYPCLRYEVA. Residues 130–150 form a helical membrane-spanning segment; that stretch reads VALSFVTWIQIAVSSHVTFWI. Topologically, residues 151-154 are cytoplasmic; the sequence is LASV.

Belongs to the Casparian strip membrane proteins (CASP) family. As to quaternary structure, homodimer and heterodimers. Expressed in the stele of the root.

The protein localises to the cell membrane. The protein is CASP-like protein 5B2 of Arabidopsis thaliana (Mouse-ear cress).